The primary structure comprises 65 residues: SAGTSCVPPPSBGCHAILRTGIPGRLPPLZKTCGIGPRQVZRLQBLPCPGRRQLABMIAYCPRCR.

Homotrimer.

The protein is Trypsin inhibitor of Zea mays (Maize).